The chain runs to 183 residues: Acireductone dioxygenase (183 aa).

Positions 99, 101, 105, and 144 each coordinate Fe(2+). Ni(2+) is bound by residues His99, His101, Glu105, and His144.

This sequence belongs to the acireductone dioxygenase (ARD) family. In terms of assembly, monomer. Fe(2+) serves as cofactor. It depends on Ni(2+) as a cofactor.

The enzyme catalyses 1,2-dihydroxy-5-(methylsulfanyl)pent-1-en-3-one + O2 = 3-(methylsulfanyl)propanoate + CO + formate + 2 H(+). The catalysed reaction is 1,2-dihydroxy-5-(methylsulfanyl)pent-1-en-3-one + O2 = 4-methylsulfanyl-2-oxobutanoate + formate + 2 H(+). It functions in the pathway amino-acid biosynthesis; L-methionine biosynthesis via salvage pathway; L-methionine from S-methyl-5-thio-alpha-D-ribose 1-phosphate: step 5/6. Its function is as follows. Catalyzes 2 different reactions between oxygen and the acireductone 1,2-dihydroxy-3-keto-5-methylthiopentene (DHK-MTPene) depending upon the metal bound in the active site. Fe-containing acireductone dioxygenase (Fe-ARD) produces formate and 2-keto-4-methylthiobutyrate (KMTB), the alpha-ketoacid precursor of methionine in the methionine recycle pathway. Ni-containing acireductone dioxygenase (Ni-ARD) produces methylthiopropionate, carbon monoxide and formate, and does not lie on the methionine recycle pathway. The chain is Acireductone dioxygenase from Microcystis aeruginosa.